A 94-amino-acid polypeptide reads, in one-letter code: Aspartyl/glutamyl-tRNA(Asn/Gln) amidotransferase subunit C (94 aa).

The protein belongs to the GatC family. In terms of assembly, heterotrimer of A, B and C subunits.

It catalyses the reaction L-glutamyl-tRNA(Gln) + L-glutamine + ATP + H2O = L-glutaminyl-tRNA(Gln) + L-glutamate + ADP + phosphate + H(+). The enzyme catalyses L-aspartyl-tRNA(Asn) + L-glutamine + ATP + H2O = L-asparaginyl-tRNA(Asn) + L-glutamate + ADP + phosphate + 2 H(+). In terms of biological role, allows the formation of correctly charged Asn-tRNA(Asn) or Gln-tRNA(Gln) through the transamidation of misacylated Asp-tRNA(Asn) or Glu-tRNA(Gln) in organisms which lack either or both of asparaginyl-tRNA or glutaminyl-tRNA synthetases. The reaction takes place in the presence of glutamine and ATP through an activated phospho-Asp-tRNA(Asn) or phospho-Glu-tRNA(Gln). The sequence is that of Aspartyl/glutamyl-tRNA(Asn/Gln) amidotransferase subunit C from Desulfotalea psychrophila (strain LSv54 / DSM 12343).